The primary structure comprises 301 residues: Acetylglutamate kinase (301 aa).

Residues 70 to 71 (GG), arginine 92, and asparagine 185 each bind substrate.

The protein belongs to the acetylglutamate kinase family. ArgB subfamily.

The protein resides in the cytoplasm. The catalysed reaction is N-acetyl-L-glutamate + ATP = N-acetyl-L-glutamyl 5-phosphate + ADP. The protein operates within amino-acid biosynthesis; L-arginine biosynthesis; N(2)-acetyl-L-ornithine from L-glutamate: step 2/4. Its function is as follows. Catalyzes the ATP-dependent phosphorylation of N-acetyl-L-glutamate. In Synechococcus elongatus (strain ATCC 33912 / PCC 7942 / FACHB-805) (Anacystis nidulans R2), this protein is Acetylglutamate kinase.